We begin with the raw amino-acid sequence, 2530 residues long: Agglutinin-like protein 2 (2530 aa).

The first 17 residues, 1 to 17 (MLLQFLLLSLCVSVATA), serve as a signal peptide directing secretion. Intrachain disulfides connect Cys73/Cys150, Cys96/Cys112, Cys205/Cys297, and Cys227/Cys256. Asn253 and Asn315 each carry an N-linked (GlcNAc...) asparagine glycan. 6 ALS repeats span residues 364–395 (TTIT…VDVP), 400–431 (TTVT…VQVP), 437–468 (VTTT…IREP), 473–504 (VTTT…IREP), 509–540 (VTTT…IREP), and 545–576 (VTTT…IREP). A glycan (N-linked (GlcNAc...) asparagine) is linked at Asn578. One copy of the ALS 7 repeat lies at 581-612 (VTTTEYWSQSYVTTSTITAPPGGTDTVIIREP). N-linked (GlcNAc...) asparagine glycosylation is present at Asn614. 7 ALS repeats span residues 617-648 (VTTT…IREP), 653-684 (VTTT…IREP), 689-720 (VTTT…IREP), 725-756 (VTTT…IREP), 761-792 (VTTT…IREP), 797-828 (VTTT…IREP), and 833-864 (VTTT…IREP). Asn866 is a glycosylation site (N-linked (GlcNAc...) asparagine). ALS repeat units follow at residues 869–900 (VTTT…IREP), 905–936 (VTTT…IREP), 941–972 (VTTT…IREP), and 977–1008 (VTTT…IREP). The span at 954 to 967 (TTTVTGPPGGTDTV) shows a compositional bias: low complexity. Residues 954-975 (TTTVTGPPGGTDTVIIREPPNP) are disordered. An N-linked (GlcNAc...) asparagine glycan is attached at Asn1010. ALS repeat units lie at residues 1013–1044 (VTTT…IREP), 1049–1077 (VTTT…TVII), 1085–1116 (VTTT…IREP), and 1121–1152 (VTTT…IREP). Asn1154 carries N-linked (GlcNAc...) asparagine glycosylation. ALS repeat units lie at residues 1157 to 1188 (VTTT…IREP), 1193 to 1224 (VTTT…IREP), 1229 to 1260 (VTTT…IREP), 1265 to 1296 (VTTT…IREP), 1301 to 1332 (VTTT…IREP), and 1337 to 1368 (VTTT…IREP). Asn1370 is a glycosylation site (N-linked (GlcNAc...) asparagine). Residues 1373–1404 (VTTTEYWSQSYATTTTVTAPPGGTATVIIREP) form an ALS 29 repeat. An N-linked (GlcNAc...) asparagine glycan is attached at Asn1406. The ALS 30 repeat unit spans residues 1409-1440 (VTTTEYWSQSYATTTTITAPPGDTDTVIIREP). The N-linked (GlcNAc...) asparagine glycan is linked to Asn1442. ALS repeat units follow at residues 1445 to 1476 (VTTT…IREP) and 1481 to 1512 (VTTT…IREP). N-linked (GlcNAc...) asparagine glycosylation is present at Asn1514. The ALS 33 repeat unit spans residues 1517-1548 (VTTTEYWSQSYATTTTVTAPPGGTATVIIREP). Asn1550 carries an N-linked (GlcNAc...) asparagine glycan. The ALS 34 repeat unit spans residues 1553–1584 (VTTTEYWSQSYATTTTITAPPGDTDTVIIREP). Residue Asn1586 is glycosylated (N-linked (GlcNAc...) asparagine). An ALS 35 repeat occupies 1589 to 1620 (VTTTEYWSQSYATTTTVTAPPGGTDTVIIREP). Residue Asn1622 is glycosylated (N-linked (GlcNAc...) asparagine). An ALS 36 repeat occupies 1625-1656 (VTTTEYWSQSYATTTTVTAPPGGTATVIIREP). Asn1658 is a glycosylation site (N-linked (GlcNAc...) asparagine). 2 ALS repeats span residues 1661–1692 (VTTT…IREP) and 1697–1728 (VTTT…IREP). Asn1730 carries N-linked (GlcNAc...) asparagine glycosylation. One copy of the ALS 39 repeat lies at 1733–1764 (VTTTEYWSQSYATTTTVTAPPGGTDTVIIREP). N-linked (GlcNAc...) asparagine glycosylation occurs at Asn1766. ALS repeat units follow at residues 1769–1800 (VTTT…IREP) and 1805–1836 (VTTT…IREP). The N-linked (GlcNAc...) asparagine glycan is linked to Asn1838. ALS repeat units follow at residues 1841–1872 (VTTT…IREP) and 1877–1907 (VTTT…RIRE). N-linked (GlcNAc...) asparagine glycosylation is present at Asn1910. 2 ALS repeats span residues 1913 to 1944 (VTTT…IREP) and 1949 to 1980 (VTTT…IREP). N-linked (GlcNAc...) asparagine glycosylation is present at Asn1982. ALS repeat units follow at residues 1985–2016 (VTTT…IREP), 2021–2052 (VTTT…IREP), and 2057–2088 (VTTT…IREP). N-linked (GlcNAc...) asparagine glycosylation is present at Asn2090. ALS repeat units lie at residues 2093–2124 (VTTT…IREP) and 2129–2157 (VTTT…SVII). N-linked (GlcNAc...) asparagine glycosylation is present at Asn2197. Disordered stretches follow at residues 2200-2235 (VTHL…GSEN) and 2274-2494 (TTII…QQTT). The span at 2204-2233 (PSSSSKPVDIPSSDVVTSTNDNSLTSLTGS) shows a compositional bias: low complexity. A glycan (N-linked (GlcNAc...) asparagine) is linked at Asn2281. A compositionally biased stretch (low complexity) spans 2282-2296 (GSGKSKSGELSSTGS). Polar residues-rich tracts occupy residues 2329-2420 (STET…SATA) and 2429-2452 (NGAT…TTNI). Asn2444 and Asn2466 each carry an N-linked (GlcNAc...) asparagine glycan. Low complexity-rich tracts occupy residues 2453–2471 (QGGN…TGEP) and 2482–2494 (SISQ…QQTT). A lipid anchor (GPI-anchor amidated aspartate) is attached at Asp2507. Positions 2508–2530 (GSGSIVQHSGWLYVLLTAISIFF) are cleaved as a propeptide — removed in mature form.

The protein belongs to the ALS family. N-glycosylated and O-glycosylated. In terms of processing, the GPI-anchor is attached to the protein in the endoplasmic reticulum and serves to target the protein to the cell surface. There, the glucosamine-inositol phospholipid moiety is cleaved off and the GPI-modified mannoprotein is covalently attached via its lipidless GPI glycan remnant to the 1,6-beta-glucan of the outer cell wall layer.

The protein resides in the cell membrane. Its subcellular location is the secreted. The protein localises to the cell wall. In terms of biological role, cell surface adhesion protein which mediates both yeast-to-host tissue adherence and yeast aggregation. Plays an important role in the pathogenesis of C.albicans infections. This Candida albicans (strain SC5314 / ATCC MYA-2876) (Yeast) protein is Agglutinin-like protein 2 (ALS2).